The following is a 211-amino-acid chain: Uracil phosphoribosyltransferase (211 aa).

5-phospho-alpha-D-ribose 1-diphosphate is bound by residues Arg-78, Arg-103, and 130–138 (DPMLATGGT). Residues Ile-195 and 200 to 202 (GDA) contribute to the uracil site. Asp-201 provides a ligand contact to 5-phospho-alpha-D-ribose 1-diphosphate.

It belongs to the UPRTase family. It depends on Mg(2+) as a cofactor.

It catalyses the reaction UMP + diphosphate = 5-phospho-alpha-D-ribose 1-diphosphate + uracil. The protein operates within pyrimidine metabolism; UMP biosynthesis via salvage pathway; UMP from uracil: step 1/1. Its activity is regulated as follows. Allosterically activated by GTP. Functionally, catalyzes the conversion of uracil and 5-phospho-alpha-D-ribose 1-diphosphate (PRPP) to UMP and diphosphate. In Streptomyces griseus subsp. griseus (strain JCM 4626 / CBS 651.72 / NBRC 13350 / KCC S-0626 / ISP 5235), this protein is Uracil phosphoribosyltransferase.